We begin with the raw amino-acid sequence, 111 residues long: Large ribosomal subunit protein eL31 (111 aa).

Belongs to the eukaryotic ribosomal protein eL31 family.

The chain is Large ribosomal subunit protein eL31 (rpl31) from Dictyostelium discoideum (Social amoeba).